Reading from the N-terminus, the 255-residue chain is Flagellar brake protein YcgR (255 aa).

The 116-residue stretch at 130–245 (QRREHFRVPL…MAAHLQRFVM (116 aa)) folds into the PilZ domain.

The protein belongs to the YcgR family. Monomer. Interacts with the flagellar basal bodies.

It is found in the bacterial flagellum basal body. Functionally, acts as a flagellar brake, regulating swimming and swarming in a bis-(3'-5') cyclic diguanylic acid (c-di-GMP)-dependent manner. Binds 1 c-di-GMP dimer per subunit. Increasing levels of c-di-GMP lead to decreased motility. The polypeptide is Flagellar brake protein YcgR (Thiobacillus denitrificans (strain ATCC 25259 / T1)).